A 202-amino-acid polypeptide reads, in one-letter code: MANLLFALAAYLIGSVSFAVVVSKLMGLPDPHSYGSGNPGATNVLRTGNKKAAILTLIGDALKGWLAVWLAARFGPAHGLNDTGLAMVALAVFLGHLFPVFHRFAGGKGVATAAGILLAIDPILGLGTLATWLIIAFFFRYSSLAALVAAIFAPFFHVLMNGVDVMAGAIFVISVLLIARHRQNIAKLLAGKESRIGEKKKV.

4 consecutive transmembrane segments (helical) span residues Ala2–Val22, Asp82–His102, Ala119–Phe139, and Val158–Ile178.

The protein belongs to the PlsY family. As to quaternary structure, probably interacts with PlsX.

It is found in the cell inner membrane. The enzyme catalyses an acyl phosphate + sn-glycerol 3-phosphate = a 1-acyl-sn-glycero-3-phosphate + phosphate. Its pathway is lipid metabolism; phospholipid metabolism. Catalyzes the transfer of an acyl group from acyl-phosphate (acyl-PO(4)) to glycerol-3-phosphate (G3P) to form lysophosphatidic acid (LPA). This enzyme utilizes acyl-phosphate as fatty acyl donor, but not acyl-CoA or acyl-ACP. The polypeptide is Glycerol-3-phosphate acyltransferase (Cupriavidus taiwanensis (strain DSM 17343 / BCRC 17206 / CCUG 44338 / CIP 107171 / LMG 19424 / R1) (Ralstonia taiwanensis (strain LMG 19424))).